Reading from the N-terminus, the 905-residue chain is DNA-directed RNA polymerase subunit Rpo1N (905 aa).

Zn(2+) contacts are provided by Cys60, Cys63, Cys70, His73, Cys100, Cys103, Cys147, and Cys150. Positions 461, 463, and 465 each coordinate Mg(2+).

The protein belongs to the RNA polymerase beta' chain family. In terms of assembly, part of the RNA polymerase complex. Mg(2+) serves as cofactor. Requires Zn(2+) as cofactor.

The protein resides in the cytoplasm. It catalyses the reaction RNA(n) + a ribonucleoside 5'-triphosphate = RNA(n+1) + diphosphate. DNA-dependent RNA polymerase (RNAP) catalyzes the transcription of DNA into RNA using the four ribonucleoside triphosphates as substrates. Forms the clamp head domain. This chain is DNA-directed RNA polymerase subunit Rpo1N, found in Thermococcus celer.